The following is a 108-amino-acid chain: Peptidyl-prolyl cis-trans isomerase FKBP1C (108 aa).

Positions 20–108 (SQTCVMHYTG…VFDVELLKLE (89 aa)) constitute a PPIase FKBP-type domain.

The protein belongs to the FKBP-type PPIase family. FKBP1 subfamily.

It catalyses the reaction [protein]-peptidylproline (omega=180) = [protein]-peptidylproline (omega=0). Its function is as follows. Catalyzes the cis-trans isomerization of proline imidic peptide bonds in oligopeptides. The chain is Peptidyl-prolyl cis-trans isomerase FKBP1C from Homo sapiens (Human).